The chain runs to 194 residues: UPF0301 protein CBU_2093 (194 aa).

It belongs to the UPF0301 (AlgH) family.

This is UPF0301 protein CBU_2093 from Coxiella burnetii (strain RSA 493 / Nine Mile phase I).